The following is a 252-amino-acid chain: Mitochondrial cardiolipin hydrolase (252 aa).

The Mitochondrial intermembrane segment spans residues 1–4 (MGRL). The interval 1-39 (MGRLSWQVAAAAAVGLALTLEALPWVLRWLRSRRRRPRR) is required for mitochondrial localization. A helical transmembrane segment spans residues 5–27 (SWQVAAAAAVGLALTLEALPWVL). Topologically, residues 28 to 252 (RWLRSRRRRP…TCGTSSESQT (225 aa)) are cytoplasmic. The C3H1-type; atypical zinc-finger motif lies at 45–78 (PSQVTCTEALLRAPGAELAELPEGCPCGLPHGES). Positions 151 to 178 (DPGYMHHKFAIVDKRVLITGSLNWTTQA) constitute a PLD phosphodiesterase domain. Residues His-156, Lys-158, and Asp-163 contribute to the active site.

Belongs to the phospholipase D family. MitoPLD/Zucchini subfamily. As to quaternary structure, homodimer. Interacts with MOV10L1. Interacts with MIGA1 and MIGA2; possibly facilitating homodimer formation. Interacts with GK2. As to expression, predominantly expressed in testis and ovary, but not limited to gonads (at protein level). It is also found in brain, heart, pituitary gland, prostate, pancreas, thyroid, bone marrow, lung and muscle.

Its subcellular location is the mitochondrion outer membrane. It localises to the golgi apparatus. The catalysed reaction is a cardiolipin + H2O = a 1,2-diacyl-sn-glycero-3-phospho-(1'-sn-glycerol) + a 1,2-diacyl-sn-glycero-3-phosphate + H(+). Its activity is regulated as follows. MYC stimulates its phospholipase activity. MIGA1 and MIGA2 increase PLD6 self-association affinity and affects the homodimer conformation facilitating its phospholipase activity over the nuclease activity. Single stranded DNA (ssDNA) hydrolase activity does not depend upon, but is stimulated by the presence of Ca(2+) and Mn(2+). Presents phospholipase and nuclease activities, depending on the different physiological conditions. Interaction with Mitoguardin (MIGA1 or MIGA2) affects the dimer conformation, facilitating the lipase activity over the nuclease activity. Plays a key role in mitochondrial fusion and fission via its phospholipase activity. In its phospholipase role, it uses the mitochondrial lipid cardiolipin as substrate to generate phosphatidate (PA or 1,2-diacyl-sn-glycero-3-phosphate), a second messenger signaling lipid. Production of PA facilitates Mitofusin-mediated fusion, whereas the cleavage of PA by the Lipin family of phosphatases produces diacylgycerol (DAG) which promotes mitochondrial fission. Both Lipin and DAG regulate mitochondrial dynamics and membrane fusion/fission, important processes for adapting mitochondrial metabolism to changes in cell physiology. Mitochondrial fusion enables cells to cope with the increased nucleotide demand during DNA synthesis. Mitochondrial function and dynamics are closely associated with biological processes such as cell growth, proliferation, and differentiation. Mediator of MYC activity, promotes mitochondrial fusion and activates AMPK which in turn inhibits YAP/TAZ, thereby inducing cell growth and proliferation. The endonuclease activity plays a critical role in PIWI-interacting RNA (piRNA) biogenesis during spermatogenesis. Implicated in spermatogenesis and sperm fertility in testicular germ cells, its single strand-specific nuclease activity is critical for the biogenesis/maturation of PIWI-interacting RNA (piRNA). MOV10L1 selectively binds to piRNA precursors and funnels them to the endonuclease that catalyzes the first cleavage step of piRNA processing to generate piRNA intermediate fragments that are subsequently loaded to Piwi proteins. Cleaves either DNA or RNA substrates with similar affinity, producing a 5' phosphate end, in this way it participates in the processing of primary piRNA transcripts. piRNAs provide essential protection against the activity of mobile genetic elements. piRNA-mediated transposon silencing is thus critical for maintaining genome stability, in particular in germline cells when transposons are mobilized as a consequence of wide-spread genomic demethylation. PA may act as signaling molecule in the recognition/transport of the precursor RNAs of primary piRNAs. Interacts with tesmin in testes, suggesting a role in spermatogenesis via association with its interacting partner. The polypeptide is Mitochondrial cardiolipin hydrolase (PLD6) (Homo sapiens (Human)).